Here is a 357-residue protein sequence, read N- to C-terminus: Protein RecA (357 aa).

Residue 67-74 (GPESSGKT) participates in ATP binding. The tract at residues 335–357 (LASSASDDESTEGNIDLETGEIF) is disordered.

The protein belongs to the RecA family.

It localises to the cytoplasm. Can catalyze the hydrolysis of ATP in the presence of single-stranded DNA, the ATP-dependent uptake of single-stranded DNA by duplex DNA, and the ATP-dependent hybridization of homologous single-stranded DNAs. It interacts with LexA causing its activation and leading to its autocatalytic cleavage. The protein is Protein RecA of Shewanella putrefaciens (strain CN-32 / ATCC BAA-453).